A 421-amino-acid polypeptide reads, in one-letter code: 3-isopropylmalate dehydratase large subunit (421 aa).

3 residues coordinate [4Fe-4S] cluster: cysteine 302, cysteine 362, and cysteine 365.

Belongs to the aconitase/IPM isomerase family. LeuC type 2 subfamily. As to quaternary structure, heterodimer of LeuC and LeuD. It depends on [4Fe-4S] cluster as a cofactor.

The enzyme catalyses (2R,3S)-3-isopropylmalate = (2S)-2-isopropylmalate. The protein operates within amino-acid biosynthesis; L-leucine biosynthesis; L-leucine from 3-methyl-2-oxobutanoate: step 2/4. Functionally, catalyzes the isomerization between 2-isopropylmalate and 3-isopropylmalate, via the formation of 2-isopropylmaleate. This Nitratiruptor sp. (strain SB155-2) protein is 3-isopropylmalate dehydratase large subunit.